A 922-amino-acid polypeptide reads, in one-letter code: 1,4-alpha-glucan-branching enzyme 1, chloroplastic/amyloplastic (922 aa).

The N-terminal 47 residues, 1 to 47 (MVYTISGIRFPVLPSLHKSTLRCDRRASSHSFFLKNNSSSFSRTSLY), are a transit peptide targeting the chloroplast. The tract at residues 83-130 (LENPDITSEDAQNLEDLTMKDGNKYNIDESTSSYREVGDEKGSVTSSS) is disordered. A compositionally biased stretch (basic and acidic residues) spans 99-109 (LTMKDGNKYNI). Asp494 (nucleophile) is an active-site residue. Residue Glu549 is the Proton donor of the active site. The disordered stretch occupies residues 870-922 (VESEPIELSVEEAESEPIERSVEEVESETTQQSVEVESETTQQSVEVESETTQ). Over residues 897–922 (ETTQQSVEVESETTQQSVEVESETTQ) the composition is skewed to low complexity.

The protein belongs to the glycosyl hydrolase 13 family. GlgB subfamily. In terms of assembly, monomer. Expressed in roots, leaves, stipules, pods and flowers.

It is found in the plastid. The protein localises to the chloroplast. It localises to the amyloplast. It carries out the reaction Transfers a segment of a (1-&gt;4)-alpha-D-glucan chain to a primary hydroxy group in a similar glucan chain.. It functions in the pathway glycan biosynthesis; starch biosynthesis. In terms of biological role, catalyzes the formation of the alpha-1,6-glucosidic linkages in starch by scission of a 1,4-alpha-linked oligosaccharide from growing alpha-1,4-glucan chains and the subsequent attachment of the oligosaccharide to the alpha-1,6 position. May preferentially transfer short chains during branching. Responsible for the synthesis of about 75% of the amylopectin found in the starch granules of mature embryos. The protein is 1,4-alpha-glucan-branching enzyme 1, chloroplastic/amyloplastic (SBEI) of Pisum sativum (Garden pea).